Here is a 386-residue protein sequence, read N- to C-terminus: Cytotoxic granule associated RNA binding protein TIA1 (386 aa).

Residue Met1 is modified to N-acetylmethionine. RRM domains lie at 7–83 (KTLY…WATT), 106–184 (FHVF…WATR), and 214–286 (CTVY…WGKE). The interval 355-376 (GPNYSVPPPQGQNGSMLPSQPA) is disordered.

Homooligomer; homooligomerization is induced by Zn(2+). Interacts with FASTK; the interactions leads to its phosphorylation. Interacts (via RRM1 and the C-terminal glutamine-rich (Q) sequence) with SNRPC/U1-C (via N-terminus); thereby facilitating spliceosomal U1 snRNP recruitment to 5' splice sites. Post-translationally, phosphorylatedby FASTK; phosphorylation occurs after FAS ligation in FAS-mediated apoptosis and before DNA fragmentation.

It is found in the nucleus. The protein resides in the cytoplasm. It localises to the stress granule. In terms of biological role, RNA-binding protein involved in the regulation of alternative pre-RNA splicing and mRNA translation by binding to uridine-rich (U-rich) RNA sequences. Binds to U-rich sequences immediately downstream from a 5' splice sites in a uridine-rich small nuclear ribonucleoprotein (U snRNP)-dependent fashion, thereby modulating alternative pre-RNA splicing. Preferably binds to the U-rich IAS1 sequence in a U1 snRNP-dependent manner; this binding is optimal if a 5' splice site is adjacent to IAS1. Activates the use of heterologous 5' splice sites; the activation depends on the intron sequence downstream from the 5' splice site, with a preference for a downstream U-rich sequence. By interacting with SNRPC/U1-C, promotes recruitment and binding of spliceosomal U1 snRNP to 5' splice sites followed by U-rich sequences, thereby facilitating atypical 5' splice site recognition by U1 snRNP. Activates splicing of alternative exons with weak 5' splice sites followed by a U-rich stretch on its own pre-mRNA and on TIAR mRNA. Acts as a modulator of alternative splicing for the apoptotic FAS receptor, thereby promoting apoptosis. Binds to the 5' splice site region of FAS intron 5 to promote accumulation of transcripts that include exon 6 at the expense of transcripts in which exon 6 is skipped, thereby leading to the transcription of a membrane-bound apoptotic FAS receptor, which promotes apoptosis. Binds to a conserved AU-rich cis element in COL2A1 intron 2 and modulates alternative splicing of COL2A1 exon 2. Also binds to the equivalent AT-rich element in COL2A1 genomic DNA, and may thereby be involved in the regulation of transcription. Involved in the repression of mRNA translation by binding to AU-rich elements (AREs) located in mRNA 3' untranslated regions (3' UTRs), including target ARE-bearing mRNAs encoding TNF and PTGS2. Also participates in the cellular response to environmental stress, by acting downstream of the stress-induced phosphorylation of EIF2S1/EIF2A to promote the recruitment of untranslated mRNAs to cytoplasmic stress granules (SGs), leading to stress-induced translational arrest. Formation and recruitment to SGs is regulated by Zn(2+). Possesses nucleolytic activity against cytotoxic lymphocyte target cells. The sequence is that of Cytotoxic granule associated RNA binding protein TIA1 (Tia1) from Mus musculus (Mouse).